A 305-amino-acid polypeptide reads, in one-letter code: Acetaldehyde dehydrogenase (305 aa).

The active-site Acyl-thioester intermediate is the cysteine 130. NAD(+) is bound by residues 161-169 (SVGPGTRKN) and asparagine 272.

This sequence belongs to the acetaldehyde dehydrogenase family.

It carries out the reaction acetaldehyde + NAD(+) + CoA = acetyl-CoA + NADH + H(+). This Leptothrix cholodnii (strain ATCC 51168 / LMG 8142 / SP-6) (Leptothrix discophora (strain SP-6)) protein is Acetaldehyde dehydrogenase.